Here is a 323-residue protein sequence, read N- to C-terminus: Chitin-binding lectin 1 (323 aa).

Positions 1–22 (MKETAISVLALLTLFLLEVVSA) are cleaved as a signal peptide. 4-hydroxyproline occurs at positions 50, 51, 53, and 55. O-linked (Ara...) hydroxyproline glycosylation is found at Pro50, Pro51, Pro53, and Pro55. Chitin-binding type-1 domains are found at residues 58–101 (YPQC…QCPG) and 105–149 (EGRC…QCKL). Intrachain disulfides connect Cys61-Cys77, Cys70-Cys83, Cys76-Cys90, Cys95-Cys99, Cys108-Cys125, Cys117-Cys131, Cys124-Cys138, and Cys143-Cys147. Chitin is bound by residues Ser78, Trp80, Trp82, and Tyr89. The tract at residues 150-210 (PSPPPPPPPP…PPPPPPALPY (61 aa)) is extensin-like. O-linked (Gal) serine glycosylation is present at Ser151. A run of 10 repeats spans residues 151 to 159 (SPPPPPPPP), 160 to 164 (SPPPP), 165 to 167 (SPP), 168 to 172 (SPPPP), 173 to 180 (SPPPPPPP), 181 to 185 (SPPPP), 186 to 190 (SPPPP), 191 to 192 (SP), 193 to 198 (SPPPPP), and 200 to 206 (SPPPPPP). The 10 X approximate repeats of S-P-P-P-P stretch occupies residues 151-206 (SPPPPPPPPSPPPPSPPSPPPPSPPPPPPPSPPPPSPPPPSPSPPPPPASPPPPPP). Residues Pro152, Pro153, Pro154, Pro155, Pro156, Pro157, Pro158, and Pro159 each carry the 4-hydroxyproline modification. Pro152, Pro153, Pro154, Pro155, Pro156, Pro157, Pro158, and Pro159 each carry an O-linked (Ara...) hydroxyproline glycan. The disordered stretch occupies residues 154 to 203 (PPPPPPSPPPPSPPSPPPPSPPPPPPPSPPPPSPPPPSPSPPPPPASPPP). O-linked (Gal) serine glycosylation occurs at Ser160. Pro161, Pro162, Pro163, and Pro164 each carry 4-hydroxyproline. O-linked (Ara...) hydroxyproline glycosylation is found at Pro161, Pro162, Pro163, and Pro164. Residue Ser165 is glycosylated (O-linked (Gal) serine). 2 positions are modified to 4-hydroxyproline: Pro166 and Pro167. Pro166 and Pro167 each carry an O-linked (Ara...) hydroxyproline glycan. Ser168 is a glycosylation site (O-linked (Gal) serine). A 4-hydroxyproline mark is found at Pro169, Pro170, Pro171, and Pro172. O-linked (Ara...) hydroxyproline glycosylation is found at Pro169, Pro170, Pro171, and Pro172. Ser173 carries an O-linked (Gal) serine glycan. 7 positions are modified to 4-hydroxyproline: Pro174, Pro175, Pro176, Pro177, Pro178, Pro179, and Pro180. O-linked (Ara...) hydroxyproline glycans are attached at residues Pro174, Pro175, Pro176, Pro177, Pro178, Pro179, and Pro180. O-linked (Gal) serine glycosylation is present at Ser181. 4 positions are modified to 4-hydroxyproline: Pro182, Pro183, Pro184, and Pro185. Residues Pro182, Pro183, Pro184, and Pro185 are each glycosylated (O-linked (Ara...) hydroxyproline). Ser186 is a glycosylation site (O-linked (Gal) serine). 4-hydroxyproline occurs at positions 187, 188, 189, and 190. 4 O-linked (Ara...) hydroxyproline glycosylation sites follow: Pro187, Pro188, Pro189, and Pro190. The O-linked (Gal) serine glycan is linked to Ser191. Residue Pro192 is modified to 4-hydroxyproline. A glycan (O-linked (Ara...) hydroxyproline) is linked at Pro192. O-linked (Gal) serine glycosylation is present at Ser193. 4-hydroxyproline is present on residues Pro194, Pro195, Pro196, Pro197, and Pro198. O-linked (Ara...) hydroxyproline glycosylation is found at Pro194, Pro195, Pro196, Pro197, and Pro198. O-linked (Gal) serine glycosylation is present at Ser200. A 4-hydroxyproline mark is found at Pro201, Pro202, Pro203, Pro204, Pro205, Pro206, and Pro209. O-linked (Ara...) hydroxyproline glycosylation is found at Pro201, Pro202, Pro203, Pro204, Pro205, Pro206, and Pro209. Chitin-binding type-1 domains lie at 210 to 253 (YPQC…QCPG) and 257 to 301 (EGRC…QCNT). 8 disulfide bridges follow: Cys213–Cys229, Cys222–Cys235, Cys228–Cys242, Cys247–Cys251, Cys260–Cys277, Cys269–Cys283, Cys276–Cys290, and Cys295–Cys299. Chitin is bound by residues Ser230, Trp232, Trp234, and Tyr241.

This sequence in the central section; belongs to the extensin family. In terms of assembly, homodimer. Post-translationally, heavily glycosylated with beta-arabinose on hydroxyprolines and with alpha-galactose on serines of the extensin-like domain. As no other sugars could be detected in the native lectin, it is unlikely that the three putative N-glycosylation sites are actually glycosylated. In terms of processing, the N-terminus is blocked. The N-terminal sequences proposed in PubMed:9022287 and PubMed:11056399 originate probably from truncated proteins.

Functionally, this protein might function as a defense against chitin containing pathogens. Binds to several branched or linear N-acetyllactosamine-containing glycosphingolipids and also to lactosylceramide with sphingosine and non-hydroxy fatty acids. The chain is Chitin-binding lectin 1 from Solanum tuberosum (Potato).